Reading from the N-terminus, the 204-residue chain is Proteasome subunit beta 2 (204 aa).

The propeptide at 1–6 is removed in mature form; by autocatalysis; it reads MEVLPG. Catalysis depends on T7, which acts as the Nucleophile.

This sequence belongs to the peptidase T1B family. The 20S proteasome core is composed of 14 alpha and 14 beta subunits that assemble into four stacked heptameric rings, resulting in a barrel-shaped structure. The two inner rings, each composed of seven catalytic beta subunits, are sandwiched by two outer rings, each composed of seven alpha subunits. The catalytic chamber with the active sites is on the inside of the barrel. Has a gated structure, the ends of the cylinder being occluded by the N-termini of the alpha-subunits. Is capped at one or both ends by the proteasome regulatory ATPase, PAN.

Its subcellular location is the cytoplasm. The enzyme catalyses Cleavage of peptide bonds with very broad specificity.. With respect to regulation, the formation of the proteasomal ATPase PAN-20S proteasome complex, via the docking of the C-termini of PAN into the intersubunit pockets in the alpha-rings, triggers opening of the gate for substrate entry. Interconversion between the open-gate and close-gate conformations leads to a dynamic regulation of the 20S proteasome proteolysis activity. Functionally, component of the proteasome core, a large protease complex with broad specificity involved in protein degradation. The sequence is that of Proteasome subunit beta 2 from Thermofilum pendens (strain DSM 2475 / Hrk 5).